The primary structure comprises 311 residues: Mediator of RNA polymerase II transcription subunit 27-A (311 aa).

It belongs to the Mediator complex subunit 27 family. As to quaternary structure, component of the Mediator complex.

It is found in the nucleus. Functionally, component of the Mediator complex, a coactivator involved in the regulated transcription of nearly all RNA polymerase II-dependent genes. Mediator functions as a bridge to convey information from gene-specific regulatory proteins to the basal RNA polymerase II transcription machinery. Mediator is recruited to promoters by direct interactions with regulatory proteins and serves as a scaffold for the assembly of a functional preinitiation complex with RNA polymerase II and the general transcription factors. This is Mediator of RNA polymerase II transcription subunit 27-A (med27-a) from Xenopus laevis (African clawed frog).